The primary structure comprises 462 residues: Calcitonin gene-related peptide type 1 receptor (462 aa).

Positions 1–22 (MEKKFFLSFLFLLPFFMILVIA) are cleaved as a signal peptide. The Extracellular portion of the chain corresponds to 23 to 140 (ESEEENPDDL…NTHEKVKTAL (118 aa)). 3 cysteine pairs are disulfide-bonded: Cys49-Cys75, Cys66-Cys106, and Cys89-Cys128. Asn67, Asn119, and Asn124 each carry an N-linked (GlcNAc...) asparagine glycan. The helical transmembrane segment at 141–165 (NLFYLTIIGHVLSIASLLISLGIFF) threads the bilayer. Over 166–176 (YFKSLSCQRIT) the chain is Cytoplasmic. The chain crosses the membrane as a helical span at residues 177–199 (LHKNLFFSFVCNSVITIIHLTAV). Over 200–210 (ANNQALVATNP) the chain is Extracellular. The helical transmembrane segment at 211-239 (VSCKVSQFIHLYLMGCNYFWMLCEGIYLH) threads the bilayer. Residues 240 to 253 (TLVVVAVFAEKQHL) are Cytoplasmic-facing. Residues 254–274 (MWYYFLGWGFPLIPACIHAVA) form a helical membrane-spanning segment. The Extracellular segment spans residues 275-290 (RRLYYNDNCWISSDTQ). The required for RAMP3 interaction stretch occupies residues 289–290 (TQ). The helical transmembrane segment at 291 to 315 (LLYIIHGPICAALLVNLFFLLNIVR) threads the bilayer. At 316–330 (VLITKLKVTHQAESN) the chain is on the cytoplasmic side. Residues 331-352 (LYMKAVRATLILVPLLGIEFVL) form a helical membrane-spanning segment. Residues 353 to 367 (IPWRPEGKIAEEIYD) lie on the Extracellular side of the membrane. A helical transmembrane segment spans residues 368–388 (YIINILMHYQGLLVSTIFCFF). Topologically, residues 389–462 (NGEVQAILRR…VVIKPEKLYD (74 aa)) are cytoplasmic. Phosphoserine is present on residues Ser421 and Ser446.

It belongs to the G-protein coupled receptor 2 family. Heterodimer of CALCRL and RAMP1; the receptor complex functions as CGRP receptor. Heterodimer of CALCRL and RAMP2 or CALCRL and RAMP3; the complexes function as adrenomedullin receptor.

The protein localises to the cell membrane. Functionally, g protein-coupled receptor which specificity is determined by its interaction with receptor-activity-modifying proteins (RAMPs). Together with RAMP1, form the receptor complex for calcitonin-gene-related peptides CALCA/CGRP1 and CALCB/CGRP2. Together with RAMP2 or RAMP3, function as receptor complexes for adrenomedullin (ADM and ADM2). Ligand binding causes a conformation change that triggers signaling via guanine nucleotide-binding proteins (G proteins) and modulates the activity of downstream effectors. Activates cAMP-dependent pathway. In Bos taurus (Bovine), this protein is Calcitonin gene-related peptide type 1 receptor (CALCRL).